A 373-amino-acid chain; its full sequence is MTDNSKIRVVVGMSGGVDSSVTALLLKEQGYDVIGVFMKNWDDTDEFGVCTATEDYKDVAAVADQIGIPYYSVNFEKEYWDRVFEYFLAEYRAGRTPNPDVMCNKEIKFKAFLDYAMTLGADYVATGHYAQVKRDENGTVHMLRGADNGKDQTYFLSQLSQEQLQKTLFPLGHLQKSEVREIAERAGLATAKKKDSTGICFIGEKNFKQFLSQYLPAQKGRMMTIDGRDMGEHAGLMYYTIGQRGGLGIGGQHGGDNQPWFVVGKDLSQNILYVGQGFYHEALMSNSLDASVIHFTREMPEEFTFECTAKFRYRQPDSHVAVHVRGDKAEVVFAEPQRAITPGQAVVFYDGKECLGGGMIDMAYKNGQPCQYI.

Residues Gly-12 to Ser-19 and Met-38 contribute to the ATP site. The segment at Asn-98–Asp-100 is interaction with target base in tRNA. Residue Cys-103 is the Nucleophile of the active site. Cys-103 and Cys-200 are oxidised to a cystine. Gly-127 is a binding site for ATP. Residues Lys-150–Gln-152 form an interaction with tRNA region. Cys-200 serves as the catalytic Cysteine persulfide intermediate. The interval Arg-312–Tyr-313 is interaction with tRNA.

Belongs to the MnmA/TRMU family.

The protein localises to the cytoplasm. The enzyme catalyses S-sulfanyl-L-cysteinyl-[protein] + uridine(34) in tRNA + AH2 + ATP = 2-thiouridine(34) in tRNA + L-cysteinyl-[protein] + A + AMP + diphosphate + H(+). Functionally, catalyzes the 2-thiolation of uridine at the wobble position (U34) of tRNA, leading to the formation of s(2)U34. The chain is tRNA-specific 2-thiouridylase MnmA from Streptococcus pyogenes serotype M28 (strain MGAS6180).